The primary structure comprises 1172 residues: DNA-directed RNA polymerases IV and V subunit 2 (1172 aa).

Mg(2+) is bound at residue D786. Positions 1108, 1111, 1133, and 1136 each coordinate Zn(2+). A C4-type zinc finger spans residues C1108–C1136.

This sequence belongs to the RNA polymerase beta chain family. In terms of assembly, component of the RNA polymerase IV and V complexes. Interacts with SSH1, NRPD1 and NRPE1. As to expression, mostly expressed in seedlings, flowers and roots, present ubiquitously, except in sperm cells.

It localises to the nucleus. The enzyme catalyses RNA(n) + a ribonucleoside 5'-triphosphate = RNA(n+1) + diphosphate. In terms of biological role, DNA-dependent RNA polymerase catalyzes the transcription of DNA into RNA using the four ribonucleoside triphosphates as substrates. Second largest component of RNA polymerases IV and V which mediate short-interfering RNAs (siRNA) accumulation and subsequent RNA-directed DNA methylation-dependent (RdDM) transcriptional gene silencing (TGS) of endogenous repeated sequences, including transposable elements. Proposed to contribute to the polymerase catalytic activity and forms the polymerase active center together with the largest subunit. Also required for full erasure of methylation when the RNA trigger is withdrawn. Required for intercellular RNA interference (RNAi) leading to systemic post-transcriptional gene silencing. Involved in the maintenance of post-transcriptional RNA silencing. During interphase, mediates siRNA-independent heterochromatin association and methylation into chromocenters and condensation and cytosine methylation at pericentromeric major repeats. Required for complete maintenance of the 35S promoter homology-dependent TGS in transgenic plants and for the initial establishment of DNA methylation. The protein is DNA-directed RNA polymerases IV and V subunit 2 (NRPD2) of Arabidopsis thaliana (Mouse-ear cress).